A 1746-amino-acid chain; its full sequence is Inactive tyrosine-protein kinase PEAK1 (1746 aa).

Residues 44–66 (KTNANHSNNHRIRNTGNFRPPVA) form a disordered region. Position 281 is a phosphoserine (S281). Disordered regions lie at residues 334–411 (QSMV…KVPE) and 489–517 (LEGP…LTPG). Over residues 338 to 349 (SSDSTSPDSSLT) the composition is skewed to low complexity. The span at 355–364 (ETASSLSQKI) shows a compositional bias: polar residues. The span at 492–513 (PVNSPKTKSSSSTPNSPVTSSS) shows a compositional bias: low complexity. Phosphoserine occurs at positions 540, 572, and 587. The disordered stretch occupies residues 551–577 (ITSGTGPNVPPRKNCHKSAPTSPTATN). 2 positions are modified to phosphotyrosine: Y635 and Y641. S648 bears the Phosphoserine mark. Y665 carries the post-translational modification Phosphotyrosine. 5 disordered regions span residues 671 to 700 (ESKV…HKRG), 713 to 764 (LNRG…EKAS), 802 to 920 (DADV…AADA), 1052 to 1102 (VTED…DPNP), and 1138 to 1158 (GKTD…LPKK). Residues 675–694 (PDNTTSKTTDCLQTKGFSNS) are compositionally biased toward polar residues. A compositionally biased stretch (low complexity) spans 718-730 (SSPQRSYSSSHSS). Composition is skewed to polar residues over residues 748–758 (TQESQMVGSSS) and 820–841 (LFTS…PTTK). Residues S826 and S854 each carry the phosphoserine modification. Positions 864-874 (SEPPAPFPPPR) are enriched in pro residues. Residues 889-902 (HFTNWTKPTSPTRS) are compositionally biased toward polar residues. Residue S898 is modified to Phosphoserine. Composition is skewed to basic and acidic residues over residues 903-920 (TEAE…AADA), 1052-1062 (VTEDFSPRDPR), and 1084-1094 (ELEREDGKEDI). The residue at position 1151 (T1151) is a Phosphothreonine. Y1188 is modified (phosphotyrosine). Residues 1285-1311 (EVVGKIRSLHTDALKKLAVKCEDLFMA) are required for homodimerization. A Protein kinase domain is found at 1313–1675 (QKDQLRFGVD…LLWGPREDLF (363 aa)). S1374 is subject to Phosphoserine. Residues 1402–1456 (LLPWEDPDDPEKDEDDMEETEEDAKGETDGKNPKPCSEAASSQKENQGVMSKKQR) are disordered. The span at 1406–1423 (EDPDDPEKDEDDMEETEE) shows a compositional bias: acidic residues. Residues 1424 to 1433 (DAKGETDGKN) are compositionally biased toward basic and acidic residues. Positions 1440-1450 (AASSQKENQGV) are enriched in polar residues. Residues 1670 to 1743 (PREDLFQTFT…DSLSCIVKIL (74 aa)) form a required for homodimerization region.

It belongs to the protein kinase superfamily. As to quaternary structure, homodimer. Interacts with BCAR1 and CRK. Interacts with PRAG1. Interacts (when phosphorylated at Tyr-1188) with SHC1 (via PID domain). Found in a complex with PPP1CA, PPP1CC, SHC1 and PEAK1. Interacts (when phosphorylated at Tyr-635) with tensin TNS3 (when phosphorylated on the SH2 domain); TNS3 also interacts with integrins ITGB1, ITGB3 and ITGB5 and mediates their association with PEAK1. Interacts with RASAL2 and GRB2. In terms of processing, phosphorylated on tyrosine in a CSK-dependent manner in response to adhesion to fibronectin and to EGF stimulation. Phosphorylation at Tyr-665 by a Src family kinase controls subcellular localization to focal adhesion and focal adhesion dynamics. Phosphorylation at Tyr-1188 is essential for binding to SHC1. Phosphorylation at Tyr-635 promotes interaction with tensin TNS3.

Its subcellular location is the cytoplasm. The protein localises to the cytoskeleton. It localises to the cell junction. The protein resides in the focal adhesion. Its function is as follows. Probable catalytically inactive kinase. Scaffolding protein that regulates the cytoskeleton to control cell spreading and migration by modulating focal adhesion dynamics. Acts as a scaffold for mediating EGFR signaling. The protein is Inactive tyrosine-protein kinase PEAK1 (PEAK1) of Homo sapiens (Human).